The following is a 432-amino-acid chain: Elongation factor 1-gamma (432 aa).

One can recognise a GST N-terminal domain in the interval 1 to 82; that stretch reads LYTYPENWRA…YVSNEELRGS (82 aa). The 129-residue stretch at 83–211 folds into the GST C-terminal domain; the sequence is TPEAAAQVVQ…VKLCEKMAQF (129 aa). N6-acetyllysine occurs at positions 142 and 207. Basic and acidic residues predominate over residues 216–249; the sequence is FAESQPKKDTPRKEKGSREEKQKPQAERKEEKKA. Positions 216–258 are disordered; sequence FAESQPKKDTPRKEKGSREEKQKPQAERKEEKKAAAPAPEEEL. Lys248 participates in a covalent cross-link: Glycyl lysine isopeptide (Lys-Gly) (interchain with G-Cter in SUMO1). The region spanning 271-432 is the EF-1-gamma C-terminal domain; it reads AKDPFAHLPK…KAFNQGKIFK (162 aa). Residue Lys280 forms a Glycyl lysine isopeptide (Lys-Gly) (interchain with G-Cter in SUMO2) linkage. Lys396 bears the N6-acetyllysine mark. Lys429 carries the post-translational modification N6-acetyllysine; alternate. Lys429 is subject to N6-malonyllysine; alternate.

EF-1 is composed of four subunits: alpha, beta, delta, and gamma.

Its function is as follows. Probably plays a role in anchoring the complex to other cellular components. In Sus scrofa (Pig), this protein is Elongation factor 1-gamma (EEF1G).